A 255-amino-acid polypeptide reads, in one-letter code: MGQKVNPLGFRLGVTQEHHSYWFATNKQFAGFLEEDQKIRHYIYQYVQKHIRESSNTSYGYSGVSKIEIKRDTELIHVEIHTSGFPALLIKGQIKEKNRDKNKSNKNSALDQSVNKNQNKNTGQELEKMWRYVQRSLTLSNGKFRMTLSKVSNPYKEANIVAEYIARQLENRVAFRRAMKQAIKDAKENGQVKGIKIQISGRLNGAEIARVEWAREGRVPLQTLRAKIDYCHYPAQTKYGVLGIKVWIFQGEGWT.

Positions 51–124 (IRESSNTSYG…NKNQNKNTGQ (74 aa)) constitute a KH type-2 domain. Residues 96–121 (EKNRDKNKSNKNSALDQSVNKNQNKN) are disordered. A compositionally biased stretch (polar residues) spans 108 to 121 (SALDQSVNKNQNKN).

The protein belongs to the universal ribosomal protein uS3 family. Part of the 30S ribosomal subunit.

Its subcellular location is the plastid. The protein resides in the chloroplast. The chain is Small ribosomal subunit protein uS3c (rps3) from Chaetosphaeridium globosum (Charophycean green alga).